Consider the following 167-residue polypeptide: Translationally-controlled tumor protein homolog (167 aa).

A TCTP domain is found at methionine 1–cysteine 167.

The protein belongs to the TCTP family.

It localises to the cytoplasm. Functionally, involved in calcium binding and microtubule stabilization. The sequence is that of Translationally-controlled tumor protein homolog (TCTP) from Medicago sativa (Alfalfa).